The sequence spans 618 residues: Nuclear RNA export factor 1 (618 aa).

Positions 1 to 15 (MADEGKSYNEHDDRV) are enriched in basic and acidic residues. Residues 1–113 (MADEGKSYNE…RGGAGTSQDG (113 aa)) form a disordered region. At A2 the chain carries N-acetylalanine. The tract at residues 2 to 59 (ADEGKSYNEHDDRVSFPQRRKKGRGPFRWKCGVGNRRSGRGGSGIRSSRFEEDDGDVA) is minor non-specific RNA-binding. Residues 2-117 (ADEGKSYNEH…GTSQDGTTKN (116 aa)) are RNA-binding (RBD). An interaction with ALYREF/THOC4 and LUZP4 region spans residues 2 to 197 (ADEGKSYNEH…IIINSSAPPY (196 aa)). A compositionally biased stretch (basic residues) spans 19 to 28 (QRRKKGRGPF). R41 is subject to Asymmetric dimethylarginine; alternate. At R41 the chain carries Omega-N-methylarginine; alternate. The interval 60–117 (MNDPQDGPRVRFNPYTTRPNRRRDTWHDRDRIHVTVRRDRAPQERGGAGTSQDGTTKN) is major non-specific RNA-binding. The segment at 60–117 (MNDPQDGPRVRFNPYTTRPNRRRDTWHDRDRIHVTVRRDRAPQERGGAGTSQDGTTKN) is RNA binding. The short motif at 66–99 (GPRVRFNPYTTRPNRRRDTWHDRDRIHVTVRRDR) is the Nuclear localization signal element. A compositionally biased stretch (basic and acidic residues) spans 81–102 (RRDTWHDRDRIHVTVRRDRAPQ). The Nuclear export signal motif lies at 82–109 (RDTWHDRDRIHVTVRRDRAPQERGGAGT). Residues 118 to 197 (WFKITIPYGK…IIINSSAPPY (80 aa)) form the RRM domain. A 3'-nitrotyrosine modification is found at Y125. LRR repeat units lie at residues 265–290 (ELLS…QKAP), 291–314 (NLKI…IKGL), 315–342 (KLEE…TIRE), and 343–370 (RFPK…TMLP). The NTF2 domain occupies 385 to 535 (LVLHFLQQYY…LCIVNDELFV (151 aa)). Residues 564-618 (QEQQDMLQAFSTQSGMNLEWSQKCLQDNNWDYTRSAQAFTHLKAKGEIPEVAFMK) enclose the TAP-C domain.

It belongs to the NXF family. Heterodimer (via NTF2 domain) with NXT1. The formation of NXF1-NXT1 heterodimers is required for the NXF1-mediated nuclear mRNA export. Forms a complex with RANBP2/NUP358, NXT1 and RANGAP1. Associates with the exon junction complex (EJC). Associates with the transcription/export (TREX) complex. Found in a mRNA complex with UPF3A and UPF3B. Found in a post-splicing complex with RBM8A, UPF1, UPF2, UPF3A, UPF3B and RNPS1. Interacts (via N-terminus) with DHX9 (via N-terminus); this interaction is direct and negatively regulates NXF1-mediated nuclear export of constitutive transport element (CTE)-containing cellular mRNAs. Interacts with FYTTD1/UIF. Interacts with EIF4A3. Interacts with NUP42. Interacts with ALYREF/THOC4. Interacts with CHTOP. Interacts with FRG1 (via N-terminus). Interacts with LUZP4. Interacts with FMR1; the interaction occurs in a mRNA-dependent and polyribosomes-independent manner in the nucleus. Interacts with CPSF6 (via N-terminus); this interaction is direct. Interacts with RBM15. Interacts with RBM15B. Interacts with MCM3AP; this interaction is not mediated by RNA. Interacts with DDX3X (via C-terminus); this interaction may be partly involved in DDX3X nuclear export and in NXF1 localization to stress granules. Interacts with PABPC1/PABP1.

It localises to the nucleus. It is found in the nucleoplasm. The protein localises to the nucleus speckle. Its subcellular location is the nuclear pore complex. The protein resides in the nucleus envelope. It localises to the cytoplasm. It is found in the stress granule. In terms of biological role, involved in the nuclear export of mRNA species bearing retroviral constitutive transport elements (CTE) and in the export of mRNA from the nucleus to the cytoplasm (TAP/NFX1 pathway). The NXF1-NXT1 heterodimer is involved in the export of HSP70 mRNA in conjunction with ALYREF/THOC4 and THOC5 components of the TREX complex. ALYREF/THOC4-bound mRNA is thought to be transferred to the NXF1-NXT1 heterodimer for export. Also involved in nuclear export of m6A-containing mRNAs: interaction between SRSF3 and YTHDC1 facilitates m6A-containing mRNA-binding to both SRSF3 and NXF1, promoting mRNA nuclear export. This chain is Nuclear RNA export factor 1 (Nxf1), found in Rattus norvegicus (Rat).